A 247-amino-acid chain; its full sequence is Phosphoribosylaminoimidazole-succinocarboxamide synthase (247 aa).

It belongs to the SAICAR synthetase family.

The enzyme catalyses 5-amino-1-(5-phospho-D-ribosyl)imidazole-4-carboxylate + L-aspartate + ATP = (2S)-2-[5-amino-1-(5-phospho-beta-D-ribosyl)imidazole-4-carboxamido]succinate + ADP + phosphate + 2 H(+). It functions in the pathway purine metabolism; IMP biosynthesis via de novo pathway; 5-amino-1-(5-phospho-D-ribosyl)imidazole-4-carboxamide from 5-amino-1-(5-phospho-D-ribosyl)imidazole-4-carboxylate: step 1/2. This chain is Phosphoribosylaminoimidazole-succinocarboxamide synthase, found in Synechococcus sp. (strain JA-2-3B'a(2-13)) (Cyanobacteria bacterium Yellowstone B-Prime).